A 221-amino-acid polypeptide reads, in one-letter code: Small ribosomal subunit protein uS3 (221 aa).

The KH type-2 domain occupies 39–107; that stretch reads IRNYIKEKLY…TVILNIIEVK (69 aa).

This sequence belongs to the universal ribosomal protein uS3 family. In terms of assembly, part of the 30S ribosomal subunit. Forms a tight complex with proteins S10 and S14.

Functionally, binds the lower part of the 30S subunit head. Binds mRNA in the 70S ribosome, positioning it for translation. The chain is Small ribosomal subunit protein uS3 from Caldanaerobacter subterraneus subsp. tengcongensis (strain DSM 15242 / JCM 11007 / NBRC 100824 / MB4) (Thermoanaerobacter tengcongensis).